A 414-amino-acid chain; its full sequence is Enolase (414 aa).

Glutamine 162 contacts (2R)-2-phosphoglycerate. Catalysis depends on glutamate 204, which acts as the Proton donor. Positions 239, 280, and 307 each coordinate Mg(2+). Lysine 332, arginine 361, serine 362, and lysine 383 together coordinate (2R)-2-phosphoglycerate. Lysine 332 serves as the catalytic Proton acceptor.

Belongs to the enolase family. Mg(2+) serves as cofactor.

It localises to the cytoplasm. It is found in the secreted. The protein localises to the cell surface. The catalysed reaction is (2R)-2-phosphoglycerate = phosphoenolpyruvate + H2O. Its pathway is carbohydrate degradation; glycolysis; pyruvate from D-glyceraldehyde 3-phosphate: step 4/5. Its function is as follows. Catalyzes the reversible conversion of 2-phosphoglycerate (2-PG) into phosphoenolpyruvate (PEP). It is essential for the degradation of carbohydrates via glycolysis. The sequence is that of Enolase from Campylobacter jejuni subsp. jejuni serotype O:6 (strain 81116 / NCTC 11828).